The chain runs to 27 residues: EVHNFACLGKPDPGGCAHYIYRRYYYV.

A BPTI/Kunitz inhibitor domain is found at 1-27 (EVHNFACLGKPDPGGCAHYIYRRYYYV).

The protein localises to the secreted. Functionally, inhibits bovine trypsin and human neutrophil elastase. The sequence is that of Kunitz-type serine protease inhibitor 3 from Rhipicephalus microplus (Cattle tick).